The chain runs to 879 residues: Beta-alanyl-bioamine nonribosomal peptide synthetase ebony (879 aa).

The adenylation stretch occupies residues 26–540 (FEEQQLRHAD…EHVPLLVNGK (515 aa)). The Carrier domain occupies 573–650 (EDLKLTARDL…EIIEKMAANH (78 aa)). Position 611 is an O-(pantetheine 4'-phosphoryl)serine (Ser611). The condensation stretch occupies residues 666-679 (LKMEAVPLRLEHRQ). Glu696 is a dopamine binding site. Glu696 is a histamine binding site. Residues Thr825 and Asn827 each coordinate beta-alanine.

It belongs to the NRP synthetase family. Pantetheine 4'-phosphate serves as cofactor. It depends on Mg(2+) as a cofactor. Expressed in the optic neuropils in the lamina and in distinct cells at the distal border of the medulla cortex (at protein level). Expressed in the protocerebrum and thoracic ganglia (at protein level). Expressed in antennal lobes, antennal nerves and subesophagic ganglion (at protein level). Specifically, expressed in epithelial glial cells of the medulla that surround the synaptic cleft of photoreceptor axonal endings (at protein level). Expressed in some cells in the cuticle.

The protein resides in the cytoplasm. The catalysed reaction is histamine + beta-alanine + ATP = carcinine + AMP + diphosphate + H(+). It catalyses the reaction beta-alanine + ATP + H(+) = beta-alanyl-5'-AMP + diphosphate. It carries out the reaction beta-alanyl-5'-AMP + holo-[peptidyl-carrier protein] = beta-alanyl-[peptidyl-carrier protein] + AMP + H(+). The enzyme catalyses beta-alanyl-[peptidyl-carrier protein] + histamine = carcinine + holo-[peptidyl-carrier protein] + H(+). The catalysed reaction is dopamine + beta-alanine + ATP = beta-alanyl-dopamine + AMP + diphosphate + H(+). It catalyses the reaction beta-alanyl-[peptidyl-carrier protein] + dopamine = beta-alanyl-dopamine + holo-[peptidyl-carrier protein] + H(+). Functionally, nonribosomal peptide synthase which is required for the regulation of histamine and dopamine levels in various tissues through their condensation with beta-alanine. In epithelial glial cells, plays an essential role in the inactivation of histamine, the main neurotransmitter in the optical nerve system, by catalyzing the conversion of histamine into carcinine. In the cuticle, catalyzes the condensation of beta-alanine with dopamine to form beta-alanyl-dopamine (NBAD), a metabolite involved in the pigmentation and sclerotization of the insect cuticle. Also, regulates the cuticular hydrocarbon composition in females. Acts downstream of the body clock to regulate circadian behavioral rhythms. Can also condense beta-alanine with biogenic amines tyramine, octopamine, and serotonin in vitro. The chain is Beta-alanyl-bioamine nonribosomal peptide synthetase ebony from Drosophila melanogaster (Fruit fly).